A 224-amino-acid polypeptide reads, in one-letter code: DNA mismatch repair protein MutH (224 aa).

It belongs to the MutH family.

It is found in the cytoplasm. In terms of biological role, sequence-specific endonuclease that cleaves unmethylated GATC sequences. It is involved in DNA mismatch repair. In Histophilus somni (strain 2336) (Haemophilus somnus), this protein is DNA mismatch repair protein MutH.